The following is a 132-amino-acid chain: Agouti-signaling protein (132 aa).

The N-terminal stretch at 1-22 is a signal peptide; that stretch reads MDVTRLLLATLLVFLCFFTANS. N39 is a glycosylation site (N-linked (GlcNAc...) asparagine). Residues 62 to 85 are disordered; the sequence is IGRKAAEKKRSSKKEASMKKVVRP. Over residues 65 to 79 the composition is skewed to basic and acidic residues; it reads KAAEKKRSSKKEASM. 5 disulfide bridges follow: C93-C108, C100-C114, C107-C125, C111-C132, and C116-C123. Residues 93 to 132 enclose the Agouti domain; sequence CVATRNSCKPPAPACCDPCASCQCRFFRSACSCRVLSLNC.

As to expression, widely expressed at low levels. Highly expressed in the skin. Expressed in adipose tissue.

The protein localises to the secreted. Involved in the regulation of melanogenesis. The binding of ASP to MC1R precludes alpha-MSH initiated signaling and thus blocks production of cAMP, leading to a down-regulation of eumelanogenesis (brown/black pigment) and thus increasing synthesis of pheomelanin (yellow/red pigment). In higher primates, agouti may affect the quality of hair pigmentation rather than its pattern of deposition. Could well play a role in neuroendocrine aspects of melanocortin action. May have some functional role in regulating the lipid metabolism with adipocytes. In Homo sapiens (Human), this protein is Agouti-signaling protein (ASIP).